The following is a 710-amino-acid chain: Integrator complex subunit 10 (710 aa).

The interval 366–393 (IHKKRKLAEGREKTMSSDDEDPSGKARS) is disordered. The segment covering 372–381 (LAEGREKTMS) has biased composition (basic and acidic residues).

It belongs to the Integrator subunit 10 family. In terms of assembly, component of the Integrator complex, composed of core subunits INTS1, INTS2, INTS3, INTS4, INTS5, INTS6, INTS7, INTS8, INTS9/RC74, INTS10, INTS11/CPSF3L, INTS12, INTS13, INTS14 and INTS15. The core complex associates with protein phosphatase 2A subunits PPP2CA and PPP2R1A, to form the Integrator-PP2A (INTAC) complex. INTS10 is part of the tail subcomplex, composed of INTS10, INTS13, INTS14 and INTS15.

It is found in the nucleus. Functionally, component of the integrator complex, a multiprotein complex that terminates RNA polymerase II (Pol II) transcription in the promoter-proximal region of genes. The integrator complex provides a quality checkpoint during transcription elongation by driving premature transcription termination of transcripts that are unfavorably configured for transcriptional elongation: the complex terminates transcription by (1) catalyzing dephosphorylation of the C-terminal domain (CTD) of Pol II subunit POLR2A/RPB1 and SUPT5H/SPT5, (2) degrading the exiting nascent RNA transcript via endonuclease activity and (3) promoting the release of Pol II from bound DNA. The integrator complex is also involved in terminating the synthesis of non-coding Pol II transcripts, such as enhancer RNAs (eRNAs), small nuclear RNAs (snRNAs), telomerase RNAs and long non-coding RNAs (lncRNAs). This Gallus gallus (Chicken) protein is Integrator complex subunit 10 (INTS10).